The primary structure comprises 303 residues: Sulfate adenylyltransferase subunit 2 (303 aa).

Positions 282–303 are disordered; the sequence is SGRLIDHDESGSMEKKKREGYF.

This sequence belongs to the PAPS reductase family. CysD subfamily. Heterodimer composed of CysD, the smaller subunit, and CysN.

It carries out the reaction sulfate + ATP + H(+) = adenosine 5'-phosphosulfate + diphosphate. The protein operates within sulfur metabolism; hydrogen sulfide biosynthesis; sulfite from sulfate: step 1/3. Functionally, with CysN forms the ATP sulfurylase (ATPS) that catalyzes the adenylation of sulfate producing adenosine 5'-phosphosulfate (APS) and diphosphate, the first enzymatic step in sulfur assimilation pathway. APS synthesis involves the formation of a high-energy phosphoric-sulfuric acid anhydride bond driven by GTP hydrolysis by CysN coupled to ATP hydrolysis by CysD. This is Sulfate adenylyltransferase subunit 2 from Maricaulis maris (strain MCS10) (Caulobacter maris).